Consider the following 325-residue polypeptide: SPbeta prophage-derived uncharacterized protein YopR (325 aa).

This chain is SPbeta prophage-derived uncharacterized protein YopR (yopR), found in Bacillus subtilis (strain 168).